The following is a 172-amino-acid chain: Co-chaperone protein HscB homolog (172 aa).

The J domain occupies 2–74 (NHFELFGLVE…LRRAEYLLSL (73 aa)).

This sequence belongs to the HscB family. As to quaternary structure, interacts with HscA and stimulates its ATPase activity.

Co-chaperone involved in the maturation of iron-sulfur cluster-containing proteins. Seems to help targeting proteins to be folded toward HscA. The protein is Co-chaperone protein HscB homolog of Aeromonas salmonicida (strain A449).